Consider the following 116-residue polypeptide: uncharacterized protein (116 aa).

Belongs to the mimivirus L15/L51/R83 family.

This is an uncharacterized protein from Acanthamoeba polyphaga mimivirus (APMV).